The sequence spans 404 residues: Pyruvate-flavodoxin oxidoreductase (404 aa).

It belongs to the pyruvate:ferredoxin/flavodoxin oxidoreductase family.

It catalyses the reaction oxidized [flavodoxin] + pyruvate + CoA + 2 H(+) = reduced [flavodoxin] + acetyl-CoA + CO2. Its function is as follows. Oxidoreductase required for the transfer of electrons from pyruvate to flavodoxin, which reduces nitrogenase. The sequence is that of Pyruvate-flavodoxin oxidoreductase (nifJ) from Nostoc sp. (strain ATCC 29151 / PCC 7119) (Anabaena sp.).